The chain runs to 71 residues: UPF0352 protein Ssed_1809 (71 aa).

It belongs to the UPF0352 family.

The chain is UPF0352 protein Ssed_1809 from Shewanella sediminis (strain HAW-EB3).